The following is a 229-amino-acid chain: 2-C-methyl-D-erythritol 4-phosphate cytidylyltransferase (229 aa).

It belongs to the IspD/TarI cytidylyltransferase family. IspD subfamily.

It catalyses the reaction 2-C-methyl-D-erythritol 4-phosphate + CTP + H(+) = 4-CDP-2-C-methyl-D-erythritol + diphosphate. It functions in the pathway isoprenoid biosynthesis; isopentenyl diphosphate biosynthesis via DXP pathway; isopentenyl diphosphate from 1-deoxy-D-xylulose 5-phosphate: step 2/6. In terms of biological role, catalyzes the formation of 4-diphosphocytidyl-2-C-methyl-D-erythritol from CTP and 2-C-methyl-D-erythritol 4-phosphate (MEP). The polypeptide is 2-C-methyl-D-erythritol 4-phosphate cytidylyltransferase (Neisseria meningitidis serogroup C / serotype 2a (strain ATCC 700532 / DSM 15464 / FAM18)).